We begin with the raw amino-acid sequence, 173 residues long: Translation initiation factor IF-3 (173 aa).

It belongs to the IF-3 family. In terms of assembly, monomer.

It is found in the cytoplasm. IF-3 binds to the 30S ribosomal subunit and shifts the equilibrium between 70S ribosomes and their 50S and 30S subunits in favor of the free subunits, thus enhancing the availability of 30S subunits on which protein synthesis initiation begins. This is Translation initiation factor IF-3 from Aromatoleum aromaticum (strain DSM 19018 / LMG 30748 / EbN1) (Azoarcus sp. (strain EbN1)).